A 324-amino-acid chain; its full sequence is Viral cathepsin (324 aa).

The N-terminal stretch at 1-18 (MNKIVLYLLIYVGTFSAA) is a signal peptide. A propeptide spans 19–113 (YDLLKAPSYF…VVLNRPPDKG (95 aa)) (activation peptide). Cystine bridges form between Cys134–Cys175, Cys168–Cys208, and Cys263–Cys311. Residue Cys137 is part of the active site. Residue Asn159 is glycosylated (N-linked (GlcNAc...) asparagine; by host). Active-site residues include His270 and Asn290.

Belongs to the peptidase C1 family. Post-translationally, synthesized as an inactive proenzyme and activated by proteolytic removal of the inhibitory propeptide.

It catalyses the reaction Endopeptidase of broad specificity, hydrolyzing substrates of both cathepsin L and cathepsin B.. In terms of biological role, cysteine protease that plays an essential role in host liquefaction to facilitate horizontal transmission of the virus. May participate in the degradation of foreign protein expressed by the baculovirus system. This Choristoneura fumiferana defective polyhedrosis virus (Cfdef) protein is Viral cathepsin (Vcath).